The primary structure comprises 420 residues: Phosphoglycerate kinase, cytosolic (420 aa).

The (2R)-3-phosphoglycerate site is built by V23, D24, F25, N26, R39, S61, H62, G64, R65, R135, H171, and R172. Residue G217 coordinates ADP. G217 is a CDP binding site. K219 contacts (2R)-3-phosphoglycerate. K219 contacts AMP. D222 lines the CDP pocket. D222 contacts Mg(2+). ADP-binding residues include K223 and G241. K223 serves as a coordination point for AMP. K223 serves as a coordination point for ATP. G241 contributes to the CDP binding site. 2 residues coordinate AMP: A242 and A314. ATP-binding residues include A242 and A314. ADP-binding residues include A314 and N338. CDP is bound by residues G339 and F344. ADP contacts are provided by F344, E345, D377, and S378. E345 serves as a coordination point for AMP. ATP contacts are provided by E345, D377, and S378. D377 contacts Mg(2+).

It belongs to the phosphoglycerate kinase family. In terms of assembly, monomer. Requires Mg(2+) as cofactor.

Its subcellular location is the cytoplasm. The enzyme catalyses (2R)-3-phosphoglycerate + ATP = (2R)-3-phospho-glyceroyl phosphate + ADP. It functions in the pathway carbohydrate degradation; glycolysis; pyruvate from D-glyceraldehyde 3-phosphate: step 2/5. The sequence is that of Phosphoglycerate kinase, cytosolic (C1PGK) from Trypanosoma congolense.